Reading from the N-terminus, the 272-residue chain is Putative bark agglutinin LECRPA3 (272 aa).

An N-terminal signal peptide occupies residues 1 to 29 (PFNPETVYALLAMLISFFVLLASARKENS). Asparagine 36, asparagine 39, and asparagine 65 each carry an N-linked (GlcNAc...) asparagine glycan. Mn(2+)-binding residues include glutamate 150 and aspartate 152. Ca(2+) is bound by residues aspartate 152, tyrosine 154, asparagine 156, and aspartate 159. Positions 159 and 164 each coordinate Mn(2+).

This sequence belongs to the leguminous lectin family. As to quaternary structure, homotetramer. Weak expression in bark. The lectin accumulates in the inner bark in autumn.

In terms of biological role, bark lectins are storage proteins that probably maintain stocks of nitrogen during dormant period. Self-aggregatable molecules that can bind their own carbohydrate side chains. They could also play a role in the plant's defense against phytophagous invertebrates or herbivorous higher animals. The sequence is that of Putative bark agglutinin LECRPA3 from Robinia pseudoacacia (Black locust).